Reading from the N-terminus, the 641-residue chain is Chaperone protein DnaK (641 aa).

Residue Thr-198 is modified to Phosphothreonine; by autocatalysis. Composition is skewed to basic and acidic residues over residues 514-529 (AEAN…EGVE), 540-554 (SSEK…KVSE), and 608-621 (AHAD…RSGD). 2 disordered regions span residues 514–554 (AEAN…KVSE) and 604–641 (QTES…KRSA). Over residues 622–633 (DVVDADYEEVKD) the composition is skewed to acidic residues.

It belongs to the heat shock protein 70 family.

Its function is as follows. Acts as a chaperone. This is Chaperone protein DnaK from Sinorhizobium medicae (strain WSM419) (Ensifer medicae).